Reading from the N-terminus, the 253-residue chain is Ubiquinone/menaquinone biosynthesis C-methyltransferase UbiE (253 aa).

S-adenosyl-L-methionine-binding positions include T76, D97, 125 to 126, and S142; that span reads NA.

It belongs to the class I-like SAM-binding methyltransferase superfamily. MenG/UbiE family.

It carries out the reaction a 2-demethylmenaquinol + S-adenosyl-L-methionine = a menaquinol + S-adenosyl-L-homocysteine + H(+). It catalyses the reaction a 2-methoxy-6-(all-trans-polyprenyl)benzene-1,4-diol + S-adenosyl-L-methionine = a 5-methoxy-2-methyl-3-(all-trans-polyprenyl)benzene-1,4-diol + S-adenosyl-L-homocysteine + H(+). It participates in quinol/quinone metabolism; menaquinone biosynthesis; menaquinol from 1,4-dihydroxy-2-naphthoate: step 2/2. Its pathway is cofactor biosynthesis; ubiquinone biosynthesis. Methyltransferase required for the conversion of demethylmenaquinol (DMKH2) to menaquinol (MKH2) and the conversion of 2-polyprenyl-6-methoxy-1,4-benzoquinol (DDMQH2) to 2-polyprenyl-3-methyl-6-methoxy-1,4-benzoquinol (DMQH2). This Xylella fastidiosa (strain M12) protein is Ubiquinone/menaquinone biosynthesis C-methyltransferase UbiE.